The primary structure comprises 220 residues: MMQELKILNEKRAEIYWWLSSLFFKELSEQDIARYHSAEVRTFLSGLADEQSLNREVKHLVEALNRLQNRQDAQLELAADFCDLFLKSDRDSALPYASVYTDKGLLNGKPAQQMRELLGAHGVKVEQNLNEPEDHLAIQLDFLAHLAISANQIEHSAQLSSALQAQSDFISQHLLTWLPAFAERCTQFDAFGLYSAAARLALAFIQQDKHCLDELFQETH.

The protein belongs to the TorD/DmsD family. TorD subfamily.

The protein localises to the cytoplasm. Functionally, involved in the biogenesis of TorA. Acts on TorA before the insertion of the molybdenum cofactor and, as a result, probably favors a conformation of the apoenzyme that is competent for acquiring the cofactor. This chain is Chaperone protein TorD, found in Vibrio cholerae serotype O1 (strain ATCC 39315 / El Tor Inaba N16961).